The primary structure comprises 301 residues: F-box protein At4g02733 (301 aa).

The F-box domain occupies 91–146; the sequence is NSISWFLPSELTVKVFSMVDTKSLMQASACCTMFNNCAMDPLCYFHIDLTKAFKHV.

The protein is F-box protein At4g02733 of Arabidopsis thaliana (Mouse-ear cress).